A 601-amino-acid polypeptide reads, in one-letter code: Glutamine--fructose-6-phosphate aminotransferase [isomerizing] (601 aa).

The active-site Nucleophile; for GATase activity is cysteine 2. Residues 2 to 214 (CGITGYIGTD…NGDIAHLTET (213 aa)) enclose the Glutamine amidotransferase type-2 domain. SIS domains lie at 281-420 (STET…ARNA) and 453-591 (IGRE…IDKP). The active-site For Fru-6P isomerization activity is the lysine 596.

Homodimer.

The protein resides in the cytoplasm. The enzyme catalyses D-fructose 6-phosphate + L-glutamine = D-glucosamine 6-phosphate + L-glutamate. Catalyzes the first step in hexosamine metabolism, converting fructose-6P into glucosamine-6P using glutamine as a nitrogen source. The protein is Glutamine--fructose-6-phosphate aminotransferase [isomerizing] of Halobacterium salinarum (strain ATCC 700922 / JCM 11081 / NRC-1) (Halobacterium halobium).